The following is a 510-amino-acid chain: UDP-galactopyranose mutase (510 aa).

FAD contacts are provided by Thr-18, Asp-38, Leu-46, and Gly-61. The UDP-alpha-D-galactose site is built by Gly-61 and Gly-62. Residue His-63 participates in FAD binding. Positions 68, 91, and 93 each coordinate NADH. His-68, Arg-91, Ser-93, and Tyr-104 together coordinate NADPH. Residues Tyr-104, Gln-107, Met-159, Tyr-162, Asn-163, Trp-167, and Arg-182 each coordinate UDP-alpha-D-galactose. Asn-203 lines the NADPH pocket. Asn-207 lines the UDP-alpha-D-galactose pocket. FAD is bound at residue Val-242. NADPH-binding residues include Trp-315 and Tyr-317. UDP-alpha-D-galactose-binding residues include Tyr-317, Arg-327, and Tyr-419. Arg-327 is a binding site for FAD. Positions 419 and 447 each coordinate NADH. Residues Tyr-419 and Arg-447 each coordinate NADPH. Arg-447 serves as a coordination point for FAD. Tyr-453 serves as a coordination point for UDP-alpha-D-galactose. The FAD site is built by Gly-456, Asn-457, and Gln-458. Asn-457 contacts UDP-alpha-D-galactose. NADH is bound at residue Asn-457. NADPH is bound at residue Asn-457. His-460 is a binding site for NADPH. Residue Ser-461 coordinates FAD.

Belongs to the UDP-galactopyranose/dTDP-fucopyranose mutase family. As to quaternary structure, homotetramer. Requires FAD as cofactor.

It carries out the reaction UDP-alpha-D-galactose = UDP-alpha-D-galactofuranose. Functionally, UDP-galactopyranose mutase, key flavoenzyme of galactofuranose metabolism that catalyzes the 6-to-5 ring contraction of UDP-galactopyranose to UDP-galactofuranose, the donor used by various galacto-furanosyltransferases. Controls the biosynthesis of galactomannan and galactofuranose containing glycoconjugates. The flavin functions as nucleophile, forming a flavin-sugar adduct that facilitates galactose-ring opening and contraction. The binding of UDP-galactopyranose induces profound conformational changes in the enzyme and two loops on opposite sides of the active site move toward each other by over 10 Angstroms to cover the substrate and create a closed active site. The protein is UDP-galactopyranose mutase of Aspergillus fumigatus (Neosartorya fumigata).